Consider the following 454-residue polypeptide: Isthmin-1 (454 aa).

The signal sequence occupies residues 1–29; that stretch reads MVRLAAELLLLLGLLLLTLHITVLRGSGA. Disordered regions lie at residues 29–93, 125–144, and 161–209; these read ASDR…PRSF, PDSEAEKDQHPENKPSWSLP, and TNSG…STDG. The segment covering 38–55 has biased composition (polar residues); that stretch reads GNNNLNLESDSTSETSFP. A compositionally biased stretch (basic and acidic residues) spans 128–137; it reads EAEKDQHPEN. The region spanning 208–252 is the TSP type-1 domain; the sequence is DGEGDWSLWSVCSVTCGNGNQKRTRSCGYACIATESRTCDRPNCP. 3 cysteine pairs are disulfide-bonded: cysteine 219–cysteine 246, cysteine 223–cysteine 251, and cysteine 234–cysteine 238. The AMOP domain maps to 279–442; that stretch reads LFEVDMDSCE…QKCTESPSDE (164 aa).

The protein belongs to the isthmin family. Interacts with integrin ITGAV/ITGB5.

It is found in the secreted. Acts as an angiogenesis inhibitor. This Mus musculus (Mouse) protein is Isthmin-1 (Ism1).